The sequence spans 429 residues: Cytochrome bc1 complex Rieske iron-sulfur subunit (429 aa).

The tract at residues 1–45 (MSRADDDAVGVPPTCGGRSDEEERRIVPGPNPQDGAKDGAKATAV) is disordered. The next 3 helical transmembrane spans lie at 96-116 (VAVW…IFLF), 137-157 (PLYG…AVLY), and 207-227 (FGVG…GGLI). The Rieske domain occupies 316–410 (RNPVMLIRIK…ITIDTDGYLV (95 aa)). Residues Cys-353, His-355, Cys-372, and His-375 each contribute to the [2Fe-2S] cluster site. A disulfide bridge links Cys-358 with Cys-374.

Belongs to the Rieske iron-sulfur protein family. In terms of assembly, the cytochrome bc1 complex is composed of a cytochrome b (QcrB), the Rieske iron-sulfur protein (QcrA) and a diheme cytochrome c (QcrC) subunit. Requires [2Fe-2S] cluster as cofactor.

It is found in the cell membrane. Its function is as follows. Iron-sulfur subunit of the cytochrome bc1 complex, an essential component of the respiratory electron transport chain required for ATP synthesis. The bc1 complex catalyzes the oxidation of menaquinol and the reduction of cytochrome c in the respiratory chain. The bc1 complex operates through a Q-cycle mechanism that couples electron transfer to generation of the proton gradient that drives ATP synthesis. This chain is Cytochrome bc1 complex Rieske iron-sulfur subunit (qcrA), found in Mycobacterium bovis (strain ATCC BAA-935 / AF2122/97).